We begin with the raw amino-acid sequence, 241 residues long: Adenosine 5'-phosphosulfate reductase (241 aa).

Residues Cys122, Cys123, Cys205, and Cys208 each contribute to the [4Fe-4S] cluster site. The Nucleophile; cysteine thiosulfonate intermediate role is filled by Cys231.

The protein belongs to the PAPS reductase family. CysH subfamily. [4Fe-4S] cluster serves as cofactor.

The protein resides in the cytoplasm. It carries out the reaction [thioredoxin]-disulfide + sulfite + AMP + 2 H(+) = adenosine 5'-phosphosulfate + [thioredoxin]-dithiol. It functions in the pathway sulfur metabolism; hydrogen sulfide biosynthesis; sulfite from sulfate. Catalyzes the formation of sulfite from adenosine 5'-phosphosulfate (APS) using thioredoxin as an electron donor. The chain is Adenosine 5'-phosphosulfate reductase from Shouchella clausii (strain KSM-K16) (Alkalihalobacillus clausii).